The chain runs to 510 residues: MKNKLKILQIGSIDWSKEVVIPDNMDWYYFFSLTLRLAIKKVMEMEKINHFSAIIVDDLDLIPDLFLIESRIIPYTIFYSKKQQAIQEPIAFFLKRYCAQQIDLSDRPNLLRKLSKALFRGQYGDKMTPLDMVVSPGFKGRICHNGYENLELEGNFGSDFRPIVSWKYNIVASKKNPVEIWLEYEKDLSCELRLRIYNIQEGSAADLVRESVFSETDMEETIVLDNDFTSFLGITLEARGFGTLKIGAFHQRLTRYQFGKFVLGGKILKDSHRQEINYFFYPGDFKPPLVVYFSGYRRAEGFEGFGMMRGLGCPFLLISDQRLDGGVFYLGSDELEEGIRRIIQEHMELLGFSERELILSGISMGTYGAAYYGADFSPRAIILCKPLANLGTIAQRGRLRLPEVFPMALDILHRHTGGKDRENVMELDNRYWKKFKKADFSRTIFGLAYMKEEDYDPTAYEDLVQYLYPTETQLMSNGLSGRHNDDSTMVINWFMNYHRIILEKEFGRKK.

Belongs to the accessory Sec system protein Asp2 family. As to quaternary structure, part of the accessory SecA2/SecY2 protein translocation apparatus required to export cell wall protein GspB. Binds the Ser-rich domains (SSR1 and SSR2) of non-glycosylated GspB, binds much less to glycosylated protein.

In terms of biological role, part of the accessory SecA2/SecY2 system specifically required to export GspB, a serine-rich repeat cell wall protein encoded upstream in the same operon. This Streptococcus gordonii protein is Accessory Sec system protein Asp2 (asp2).